Consider the following 524-residue polypeptide: Probable beta-1,4-xylosyltransferase IRX14 (524 aa).

The Cytoplasmic portion of the chain corresponds to 1–51; that stretch reads MMKSLLPQSQLRRSAAAASAARSSGGGAGSGGADGAGSDGGAGGRAPATST. The interval 21-41 is disordered; sequence ARSSGGGAGSGGADGAGSDGG. Residues 24-41 are compositionally biased toward gly residues; the sequence is SGGGAGSGGADGAGSDGG. The chain crosses the membrane as a helical; Signal-anchor for type II membrane protein span at residues 52-71; sequence FWFLLHALCCLVSLFLGFRF. At 72 to 524 the chain is on the lumenal side; it reads SRLLFFLLFS…SRSTTKRKEN (453 aa). N-linked (GlcNAc...) asparagine glycans are attached at residues N132, N135, N240, and N353. A disordered region spans residues 492–524; the sequence is AELVDSKQDQEGRRLSRTDRSSRSRSTTKRKEN. Basic and acidic residues predominate over residues 495–513; that stretch reads VDSKQDQEGRRLSRTDRSS.

This sequence belongs to the glycosyltransferase 43 family.

It is found in the golgi apparatus membrane. Its function is as follows. Probable beta-1,4-xylosyltransferase involved in xylan biosynthesis in cell walls. This Oryza sativa subsp. japonica (Rice) protein is Probable beta-1,4-xylosyltransferase IRX14.